Reading from the N-terminus, the 188-residue chain is Probable nicotinate-nucleotide adenylyltransferase (188 aa).

Belongs to the NadD family.

The catalysed reaction is nicotinate beta-D-ribonucleotide + ATP + H(+) = deamido-NAD(+) + diphosphate. Its pathway is cofactor biosynthesis; NAD(+) biosynthesis; deamido-NAD(+) from nicotinate D-ribonucleotide: step 1/1. Functionally, catalyzes the reversible adenylation of nicotinate mononucleotide (NaMN) to nicotinic acid adenine dinucleotide (NaAD). The sequence is that of Probable nicotinate-nucleotide adenylyltransferase from Rhizobium meliloti (strain 1021) (Ensifer meliloti).